We begin with the raw amino-acid sequence, 60 residues long: 5-hydroxytryptamine receptor 2B (60 aa).

At 1-4 (VLCP) the chain is on the extracellular side. A helical membrane pass occupies residues 5–26 (AWLFLDVLFSTASIMHLCAISV). Residues aspartate 10 and threonine 15 each contribute to the ergotamine site. The DRY motif; important for ligand-induced conformation changes motif lies at 27 to 29 (DRY). Residues 27 to 46 (DRYIAIKKPIQANQYNSRAT) lie on the Cytoplasmic side of the membrane. A helical membrane pass occupies residues 47–60 (AFIKITVVWLISIG).

The protein belongs to the G-protein coupled receptor 1 family. Interacts (via C-terminus) with MPDZ. Detected in aorta, renal artery, jugular vein, vena cava and femoral vein.

Its subcellular location is the cell membrane. It localises to the synapse. The protein resides in the synaptosome. Its function is as follows. G-protein coupled receptor for 5-hydroxytryptamine (serotonin). Also functions as a receptor for various ergot alkaloid derivatives and psychoactive substances. Ligand binding causes a conformation change that triggers signaling via guanine nucleotide-binding proteins (G proteins) and modulates the activity of downstream effectors. HTR2B is coupled to G(q)/G(11) G alpha proteins and activates phospholipase C-beta, releasing diacylglycerol (DAG) and inositol 1,4,5-trisphosphate (IP3) second messengers that modulate the activity of phosphatidylinositol 3-kinase and promote the release of Ca(2+) ions from intracellular stores, respectively. Beta-arrestin family members inhibit signaling via G proteins and mediate activation of alternative signaling pathways. Plays a role in the regulation of dopamine and 5-hydroxytryptamine release, 5-hydroxytryptamine uptake and in the regulation of extracellular dopamine and 5-hydroxytryptamine levels, and thereby affects neural activity. May play a role in the perception of pain. Plays a role in the regulation of behavior, including impulsive behavior. Required for normal proliferation of embryonic cardiac myocytes and normal heart development. Protects cardiomyocytes against apoptosis. Plays a role in the adaptation of pulmonary arteries to chronic hypoxia. Plays a role in vasoconstriction. Required for normal osteoblast function and proliferation, and for maintaining normal bone density. Required for normal proliferation of the interstitial cells of Cajal in the intestine. This Sus scrofa (Pig) protein is 5-hydroxytryptamine receptor 2B (HTR2B).